The primary structure comprises 160 residues: Dysbindin domain-containing protein 1 (160 aa).

2 disordered regions span residues 1 to 34 (MESP…GDTC) and 95 to 160 (ADSD…PKED). Phosphoserine occurs at positions 3, 97, and 121. Residues 127-143 (TRAEQNREKQTPSDPER) show a composition bias toward basic and acidic residues.

Belongs to the dysbindin family.

The protein is Dysbindin domain-containing protein 1 (Dbndd1) of Rattus norvegicus (Rat).